The chain runs to 169 residues: Shikimate kinase (169 aa).

Gly13 to Thr18 contributes to the ATP binding site. Ser17 is a binding site for Mg(2+). Residues Asp35, Arg59, and Gly80 each coordinate substrate. ATP is bound at residue Arg117. Residue Arg136 coordinates substrate. Residue Arg153 coordinates ATP.

This sequence belongs to the shikimate kinase family. Monomer. Mg(2+) is required as a cofactor.

It is found in the cytoplasm. The enzyme catalyses shikimate + ATP = 3-phosphoshikimate + ADP + H(+). It participates in metabolic intermediate biosynthesis; chorismate biosynthesis; chorismate from D-erythrose 4-phosphate and phosphoenolpyruvate: step 5/7. Catalyzes the specific phosphorylation of the 3-hydroxyl group of shikimic acid using ATP as a cosubstrate. This chain is Shikimate kinase, found in Corynebacterium efficiens (strain DSM 44549 / YS-314 / AJ 12310 / JCM 11189 / NBRC 100395).